The primary structure comprises 108 residues: Glutaredoxin-C10 (108 aa).

One can recognise a Glutaredoxin domain in the interval 1–107 (MERVAKLASE…PMLKNAGALW (107 aa)). An intrachain disulfide couples C21 to C24. The short motif at 105–108 (ALWL) is the Responsive for interaction with TGA factors element.

Belongs to the glutaredoxin family. CC-type subfamily.

Its subcellular location is the cytoplasm. It is found in the nucleus. Functionally, has a glutathione-disulfide oxidoreductase activity in the presence of NADPH and glutathione reductase. Reduces low molecular weight disulfides and proteins. This chain is Glutaredoxin-C10 (GRXC10), found in Oryza sativa subsp. japonica (Rice).